The chain runs to 350 residues: Holliday junction branch migration complex subunit RuvB (350 aa).

The tract at residues 4-184 is large ATPase domain (RuvB-L); sequence TDRLIAAQPQ…FGIVQRLEFY (181 aa). ATP contacts are provided by residues Ile-23, Arg-24, Gly-65, Lys-68, Thr-69, Thr-70, 131 to 133, Arg-174, Tyr-184, and Arg-221; that span reads EDY. Thr-69 serves as a coordination point for Mg(2+). The segment at 185–255 is small ATPAse domain (RuvB-S); that stretch reads AVEELTEIVV…IADQALNMLH (71 aa). Residues 258 to 350 form a head domain (RuvB-H) region; that stretch reads RHGLDHMDRR…PLTPPGESDA (93 aa). Residues Arg-294, Arg-313, and Arg-318 each contribute to the DNA site.

The protein belongs to the RuvB family. As to quaternary structure, homohexamer. Forms an RuvA(8)-RuvB(12)-Holliday junction (HJ) complex. HJ DNA is sandwiched between 2 RuvA tetramers; dsDNA enters through RuvA and exits via RuvB. An RuvB hexamer assembles on each DNA strand where it exits the tetramer. Each RuvB hexamer is contacted by two RuvA subunits (via domain III) on 2 adjacent RuvB subunits; this complex drives branch migration. In the full resolvosome a probable DNA-RuvA(4)-RuvB(12)-RuvC(2) complex forms which resolves the HJ.

It is found in the cytoplasm. The catalysed reaction is ATP + H2O = ADP + phosphate + H(+). In terms of biological role, the RuvA-RuvB-RuvC complex processes Holliday junction (HJ) DNA during genetic recombination and DNA repair, while the RuvA-RuvB complex plays an important role in the rescue of blocked DNA replication forks via replication fork reversal (RFR). RuvA specifically binds to HJ cruciform DNA, conferring on it an open structure. The RuvB hexamer acts as an ATP-dependent pump, pulling dsDNA into and through the RuvAB complex. RuvB forms 2 homohexamers on either side of HJ DNA bound by 1 or 2 RuvA tetramers; 4 subunits per hexamer contact DNA at a time. Coordinated motions by a converter formed by DNA-disengaged RuvB subunits stimulates ATP hydrolysis and nucleotide exchange. Immobilization of the converter enables RuvB to convert the ATP-contained energy into a lever motion, pulling 2 nucleotides of DNA out of the RuvA tetramer per ATP hydrolyzed, thus driving DNA branch migration. The RuvB motors rotate together with the DNA substrate, which together with the progressing nucleotide cycle form the mechanistic basis for DNA recombination by continuous HJ branch migration. Branch migration allows RuvC to scan DNA until it finds its consensus sequence, where it cleaves and resolves cruciform DNA. This Chromohalobacter salexigens (strain ATCC BAA-138 / DSM 3043 / CIP 106854 / NCIMB 13768 / 1H11) protein is Holliday junction branch migration complex subunit RuvB.